The sequence spans 1028 residues: Unconventional myosin-Ic-A (1028 aa).

M1 carries the post-translational modification N-acetylmethionine. The Myosin motor domain occupies 12 to 696 (GVQDFVLLEN…TLFATEDALE (685 aa)). An ATP-binding site is contributed by 105-112 (GESGSGKT). At K348 the chain carries N6-methyllysine. Residues 573-595 (LSKLMEILMSKEPSYVRCIKPND) are actin-binding. IQ domains are found at residues 699-728 (KQGI…SAIN) and 722-751 (MKHS…AVDV). The 175-residue stretch at 850–1024 (KDNYPQSVPR…NGHLSVVAPR (175 aa)) folds into the TH1 domain.

The protein belongs to the TRAFAC class myosin-kinesin ATPase superfamily. Myosin family. Interacts (via its IQ motifs) with calmodulin.

The protein resides in the cytoplasm. Its subcellular location is the cell membrane. It localises to the cell projection. The protein localises to the stereocilium membrane. In terms of biological role, myosins are actin-based motor molecules with ATPase activity. Unconventional myosins serve in intracellular movements. Their highly divergent tails are presumed to bind to membranous compartments, which would be moved relative to actin filaments. Involved in egg activation by coupling dynamic actin to membrane. This is Unconventional myosin-Ic-A (myo1c-a) from Xenopus laevis (African clawed frog).